The following is a 461-amino-acid chain: D-phenylhydantoinase (461 aa).

His-59, His-61, and Lys-151 together coordinate a divalent metal cation. Lys-151 carries the post-translational modification N6-carboxylysine. Residue Tyr-156 coordinates substrate. Positions 182 and 239 each coordinate a divalent metal cation. A substrate-binding site is contributed by Ser-286. Asp-313 contacts a divalent metal cation. Asn-335 is a binding site for substrate.

Belongs to the metallo-dependent hydrolases superfamily. Hydantoinase/dihydropyrimidinase family. As to quaternary structure, homotetramer. It depends on a divalent metal cation as a cofactor. Carboxylation allows a single lysine to coordinate two divalent metal cations.

It carries out the reaction D-5-phenylhydantoin + H2O = N-carbamoyl-D-phenylglycine + H(+). In terms of biological role, catalyzes the stereospecific hydrolysis of the cyclic amide bond of D-hydantoin derivatives with an aromatic side chains at the 5'-position. Has no activity on dihydropyrimidines. The physiological function is unknown. The polypeptide is D-phenylhydantoinase (Escherichia coli O6:K15:H31 (strain 536 / UPEC)).